Reading from the N-terminus, the 361-residue chain is Cytochrome c peroxidase, mitochondrial (361 aa).

Residues 1–41 (MASAARSASRAFLRSSLRPAVRSSRFALPTQGLRVASRRGY) constitute a mitochondrion transit peptide. The active-site Proton acceptor is H122. H245 lines the heme b pocket. W261 (tryptophan radical intermediate) is an active-site residue.

Belongs to the peroxidase family. Cytochrome c peroxidase subfamily. As to quaternary structure, forms a one-to-one complex with cytochrome c. It depends on heme b as a cofactor.

It localises to the mitochondrion matrix. It is found in the mitochondrion intermembrane space. The enzyme catalyses 2 Fe(II)-[cytochrome c] + H2O2 + 2 H(+) = 2 Fe(III)-[cytochrome c] + 2 H2O. Its function is as follows. Destroys radicals which are normally produced within the cells and which are toxic to biological systems. The chain is Cytochrome c peroxidase, mitochondrial (ccp1) from Emericella nidulans (strain FGSC A4 / ATCC 38163 / CBS 112.46 / NRRL 194 / M139) (Aspergillus nidulans).